The chain runs to 77 residues: Conotoxin ArMKLT2-0251 (77 aa).

The N-terminal stretch at 1-22 (MKLTCVLIVAVLILTACQLIAA) is a signal peptide. Positions 23–46 (DDSRDLKRFSRRKMRDGMLNTKNM) are excised as a propeptide. Gln-49 bears the Pyrrolidone carboxylic acid mark. Disulfide bonds link Cys-50/Cys-65, Cys-57/Cys-68, and Cys-64/Cys-73.

Belongs to the conotoxin O1 superfamily. As to expression, expressed by the venom duct.

Its subcellular location is the secreted. The sequence is that of Conotoxin ArMKLT2-0251 from Conus arenatus (Sand-dusted cone).